The primary structure comprises 427 residues: Enolase (427 aa).

(2R)-2-phosphoglycerate is bound at residue Gln-163. The active-site Proton donor is the Glu-205. Residues Asp-242, Glu-285, and Asp-312 each coordinate Mg(2+). 4 residues coordinate (2R)-2-phosphoglycerate: Lys-337, Arg-366, Ser-367, and Lys-388. The active-site Proton acceptor is the Lys-337.

This sequence belongs to the enolase family. Mg(2+) is required as a cofactor.

It localises to the cytoplasm. Its subcellular location is the secreted. It is found in the cell surface. It catalyses the reaction (2R)-2-phosphoglycerate = phosphoenolpyruvate + H2O. It participates in carbohydrate degradation; glycolysis; pyruvate from D-glyceraldehyde 3-phosphate: step 4/5. Catalyzes the reversible conversion of 2-phosphoglycerate (2-PG) into phosphoenolpyruvate (PEP). It is essential for the degradation of carbohydrates via glycolysis. The sequence is that of Enolase from Beijerinckia indica subsp. indica (strain ATCC 9039 / DSM 1715 / NCIMB 8712).